An 808-amino-acid polypeptide reads, in one-letter code: MAAKLARLHSLRERLGATFSSHPNELIALFSRYVNQGKGMLQRHQLLAEFDALIEADKEKYAPFEDILRAAQEAIVLPPWVALAIRPRPGVWDYIRVNVSELAVEELSVSEYLAFKEQLVDGHTNSNFVLELDFEPFNASFPRPSMSKSIGNGVQFLNRHLSSKLFQDKESLYPLLNFLKAHNHKGTTMMLNDRIQSLRGLQSSLRKAEEYLMGIPQDTPYSEFNHRFQELGLEKGWGDCAKRVLDTIHLLLDLLEAPDPANLEKFLGTIPMMFNVVILSPHGYFAQSNVLGYPDTGGQVVYILDQVRALENEMLLRIKQQGLDITPKILIVTRLLPDAVGTTCGQRVEKVIGTEHTDILRVPFRSENGILRKWISRFDVWPFLETYTEDVANEIMREMQAKPDLIIGNYSDGNLVATLLAHKLGVTQCTIAHALEKTKYPNSDIYLDKFDSQYHFSCQFTADLIAMNHTDFIITSTFQEIAGSKDTVGQYESHIAFTLPGLYRVVHGIDVFDPKFNIVSPGADMSVYFPYTEADKRLTAFHPEIEELLYSEVENDEHKFVLKDKNKPIIFSMARLDRVKNMTGLVEMYGKNAHLRDLANLVIVCGDHGNQSKDREEQAEFKKMYGLIDQYKLKGHIRWISAQMNRVRNGELYRYICDTKGVFVQPAFYEAFGLTVIEAMTCGLPTIATCHGGPAEIIVDGVSGLHIDPYHSDKAADILVNFFEKCKQDSTYWDNISQGGLQRIYEKYTWKLYSERLMTLTGVYGFWKYVSNLERRETRRYIEMFYALKYRSLASAVPLAVDGESTSK.

A Phosphoserine; by CPK modification is found at Ser10. The segment at 272-749 is GT-B glycosyltransferase; sequence MMFNVVILSP…GLQRIYEKYT (478 aa).

The protein belongs to the glycosyltransferase 1 family. Plant sucrose synthase subfamily. Homotetramer or heterotetramer with SUS1. Phosphorylated at Ser-10 by CPK23 in developing seeds. In terms of tissue distribution, predominantly expressed in the leaf tissues. Expressed in seeds, and at lower levels in roots. Expressed in leaf mesophyll and phloem (at protein level).

It carries out the reaction an NDP-alpha-D-glucose + D-fructose = a ribonucleoside 5'-diphosphate + sucrose + H(+). Activated by phosphorylation at Ser-10 by CPK23. Sucrose-cleaving enzyme that provides UDP-glucose and fructose for various metabolic pathways. Functions in developing seeds by supplying substrates for the biosynthesis of storage products. This Oryza sativa subsp. japonica (Rice) protein is Sucrose synthase 2 (SUS2).